The following is a 234-amino-acid chain: Adenosine 5'-phosphosulfate reductase (234 aa).

Residues C120, C121, C203, and C206 each contribute to the [4Fe-4S] cluster site. C229 acts as the Nucleophile; cysteine thiosulfonate intermediate in catalysis.

This sequence belongs to the PAPS reductase family. CysH subfamily. [4Fe-4S] cluster serves as cofactor.

The protein resides in the cytoplasm. It catalyses the reaction [thioredoxin]-disulfide + sulfite + AMP + 2 H(+) = adenosine 5'-phosphosulfate + [thioredoxin]-dithiol. Its pathway is sulfur metabolism; hydrogen sulfide biosynthesis; sulfite from sulfate. Functionally, catalyzes the formation of sulfite from adenosine 5'-phosphosulfate (APS) using thioredoxin as an electron donor. The protein is Adenosine 5'-phosphosulfate reductase of Bacillus thuringiensis subsp. konkukian (strain 97-27).